The primary structure comprises 197 residues: Large ribosomal subunit protein uL10 (197 aa).

The segment at 163-197 (GAPAAAEAPAAEESADSAAEAAAEAPAEAPAAEEN) is disordered.

This sequence belongs to the universal ribosomal protein uL10 family. Part of the ribosomal stalk of the 50S ribosomal subunit. The N-terminus interacts with L11 and the large rRNA to form the base of the stalk. The C-terminus forms an elongated spine to which L12 dimers bind in a sequential fashion forming a multimeric L10(L12)X complex.

Its function is as follows. Forms part of the ribosomal stalk, playing a central role in the interaction of the ribosome with GTP-bound translation factors. The polypeptide is Large ribosomal subunit protein uL10 (Pseudarthrobacter chlorophenolicus (strain ATCC 700700 / DSM 12829 / CIP 107037 / JCM 12360 / KCTC 9906 / NCIMB 13794 / A6) (Arthrobacter chlorophenolicus)).